Consider the following 414-residue polypeptide: MATQRASGLLQRLAQGSLVKQILVGLVLGILLAWISKPAAEAVGLLGTLFVGALKAVAPVLVLMLVMASIANHQHGQKTNIRPILFLYLLGTFSAALAAVVFSFAFPSTLHLSSSAQDIVPPSGIVEVLRGLLMSMVSNPIDALLNANYIGILVWAVGLGFALRHGNETTKNLVNDMSNAVTFMVKLVIRFAPVGIFGLVSSTLATTGFSTLWGYAHLLVVLIGCMLLVALMVNPLLVFWKIRRNPYPLVFACLRESGVYAFFTRSSAANIPVNMALCEKLNLDRDTYSVSIPLGATINMAGAAITITVLTLAAVHTLGVPVDLPTALLLSVVASLCACGASGVAGGSLLLIPLACNMFGIPNDIAMQVVAVGFIIGVLQDSCETALNSSTDVLFTAAACQAEDERLANNALRS.

A run of 8 helical transmembrane segments spans residues 16–36 (GSLV…AWIS), 46–66 (LGTL…LMLV), 84–104 (ILFL…VFSF), 143–163 (ALLN…GFAL), 180–200 (AVTF…FGLV), 219–239 (LVVL…LLVF), 300–320 (MAGA…TLGV), and 332–352 (VVAS…LLLI).

Belongs to the dicarboxylate/amino acid:cation symporter (DAACS) (TC 2.A.23) family.

It is found in the cell inner membrane. The enzyme catalyses L-serine(in) + Na(+)(in) = L-serine(out) + Na(+)(out). It carries out the reaction L-threonine(in) + Na(+)(in) = L-threonine(out) + Na(+)(out). Functionally, involved in the import of serine and threonine into the cell, with the concomitant import of sodium (symport system). This is Serine/threonine transporter SstT from Salmonella heidelberg (strain SL476).